The sequence spans 60 residues: uncharacterized protein (60 aa).

This is an uncharacterized protein from Ureaplasma parvum serovar 3 (strain ATCC 700970).